Consider the following 489-residue polypeptide: MVSNMRVLRVLRLTGWVGIFLVLSLQQTSCAGLPHNVDTHHILTFNPSPISADGVPLSEVPNSPTTELSTTVATKTAVPTTESTSSSEAHRNSSHKIPDIICDREEVFVFLNNTGRILCDLIVDPPSDDEWSNFALDVTFNPIEYHANEKNVEVARVAGLYGVPGSDYAYPRKSELISSIRRDPQGSFWTSPTPRGNKYFIWINKTMHTMGVEVRNVDYKDNGYFQVILRDRFNRPLVEKHIYMRVCQRPASVDVLAPPVLSGENYKASCIVRHFYPPGSVYVSWRRNGNIATPRKDRDGSFWWFESGRGATLVSTITLGNSGLESPPKVSCLVAWRQGDMISTSNATAVPTVYYHPRISLAFKDGYAICTIECVPSGITVRWLVHDEPQPNTTYDTVVTGLCRTIDRYRNLASRIPVQDNWAKTKYTCRLIGYPFDVDRFQNSEYYDATPSARGMPMIVTITAVLGLALFLGIGIIITALCFYLPGRN.

The first 32 residues, 1–32 (MVSNMRVLRVLRLTGWVGIFLVLSLQQTSCAG), serve as a signal peptide directing secretion. Residues 33-455 (LPHNVDTHHI…YYDATPSARG (423 aa)) are Virion surface-facing. A disordered region spans residues 59–94 (EVPNSPTTELSTTVATKTAVPTTESTSSSEAHRNSS). A compositionally biased stretch (polar residues) spans 60–69 (VPNSPTTELS). Residues 70-81 (TTVATKTAVPTT) show a composition bias toward low complexity. Residues Asn92, Asn112, Asn204, Asn346, and Asn392 are each glycosylated (N-linked (GlcNAc...) asparagine; by host). Residues 250 to 348 (PASVDVLAPP…GDMISTSNAT (99 aa)) enclose the Ig-like domain. Residues 456-486 (MPMIVTITAVLGLALFLGIGIIITALCFYLP) form a helical membrane-spanning segment. Residues 487-489 (GRN) are Cytoplasmic-facing.

The protein belongs to the herpesviridae glycoprotein C family.

It localises to the virion membrane. This Gallus gallus (Chicken) protein is Envelope glycoprotein C homolog (gC).